Consider the following 258-residue polypeptide: tRNA pseudouridine synthase A (258 aa).

Asp52 acts as the Nucleophile in catalysis. Residue Tyr110 participates in substrate binding.

It belongs to the tRNA pseudouridine synthase TruA family. As to quaternary structure, homodimer.

It catalyses the reaction uridine(38/39/40) in tRNA = pseudouridine(38/39/40) in tRNA. Formation of pseudouridine at positions 38, 39 and 40 in the anticodon stem and loop of transfer RNAs. This chain is tRNA pseudouridine synthase A, found in Francisella tularensis subsp. holarctica (strain LVS).